The chain runs to 311 residues: Heme A synthase (311 aa).

Over 1-6 (MQRFIK) the chain is Cytoplasmic. Residues 7-27 (WLAVITSLDLLIVLLGGALVT) form a helical membrane-spanning segment. The Extracellular segment spans residues 28–62 (KTGSGQGCGKSWPLCNGEFVPSNLSMETIIELSHR). A disulfide bridge links C35 with C42. Residue E58 is part of the active site. Heme o is bound at residue H61. A helical membrane pass occupies residues 63 to 83 (LTSGSAGILVTLLCILSWKYY). Over 84–91 (KHVRETKT) the chain is Cytoplasmic. A helical transmembrane segment spans residues 92–112 (LAILSFVFLVAQALMGAAAVV). Topologically, residues 113-121 (WGQMPAVLA) are extracellular. A helical transmembrane segment spans residues 122–142 (IHFGISLISFASVILLTCLIF). Heme o is bound at residue H123. The Cytoplasmic segment spans residues 143-159 (EIDQKFDARSLIMDKKM). The helical transmembrane segment at 160-180 (KFHIYGVTIYSYIVVYTGALV) threads the bilayer. Residues 181–211 (RHERASLACPDFPLCSKNRPMPTQLHEWVQM) are Extracellular-facing. C189 and C195 form a disulfide bridge. Residues 212-232 (GHRVAAMLIFAWILYAMILAI) traverse the membrane as a helical segment. H213 is a binding site for heme b. Topologically, residues 233-243 (RHYKQQPVVYW) are cytoplasmic. A helical membrane pass occupies residues 244–264 (GWIISFILVTLQAVVGVLVVF). The Extracellular segment spans residues 265 to 271 (TNASLAM). Residues 272 to 292 (ALLHSLFISCLFAVLCYLVML) traverse the membrane as a helical segment. Position 275 (H275) interacts with heme b. The Cytoplasmic portion of the chain corresponds to 293–311 (GTRIKVNAKEAGSTSKQTK).

Belongs to the COX15/CtaA family. Type 1 subfamily. As to quaternary structure, interacts with CtaB. It depends on heme b as a cofactor.

The protein resides in the cell membrane. It catalyses the reaction Fe(II)-heme o + 2 A + H2O = Fe(II)-heme a + 2 AH2. It participates in porphyrin-containing compound metabolism; heme A biosynthesis; heme A from heme O: step 1/1. Catalyzes the conversion of heme O to heme A by two successive hydroxylations of the methyl group at C8. The first hydroxylation forms heme I, the second hydroxylation results in an unstable dihydroxymethyl group, which spontaneously dehydrates, resulting in the formyl group of heme A. The protein is Heme A synthase of Bacillus cereus (strain G9842).